We begin with the raw amino-acid sequence, 272 residues long: D-aminoacyl-tRNA deacylase (272 aa).

It belongs to the DtdA deacylase family. Monomer. Zn(2+) serves as cofactor.

The catalysed reaction is a D-aminoacyl-tRNA + H2O = a tRNA + a D-alpha-amino acid + H(+). The enzyme catalyses glycyl-tRNA(Ala) + H2O = tRNA(Ala) + glycine + H(+). D-aminoacyl-tRNA deacylase with broad substrate specificity. By recycling D-aminoacyl-tRNA to D-amino acids and free tRNA molecules, this enzyme counteracts the toxicity associated with the formation of D-aminoacyl-tRNA entities in vivo. This is D-aminoacyl-tRNA deacylase from Desulfurococcus amylolyticus (strain DSM 18924 / JCM 16383 / VKM B-2413 / 1221n) (Desulfurococcus kamchatkensis).